A 361-amino-acid chain; its full sequence is Peptide chain release factor 1 (361 aa).

Position 235 is an N5-methylglutamine (Gln-235). The disordered stretch occupies residues 287 to 309 (QKEASAMRSAQVGSGDRSERIRT).

Belongs to the prokaryotic/mitochondrial release factor family. In terms of processing, methylated by PrmC. Methylation increases the termination efficiency of RF1.

The protein resides in the cytoplasm. In terms of biological role, peptide chain release factor 1 directs the termination of translation in response to the peptide chain termination codons UAG and UAA. The chain is Peptide chain release factor 1 from Chlamydia caviae (strain ATCC VR-813 / DSM 19441 / 03DC25 / GPIC) (Chlamydophila caviae).